A 246-amino-acid polypeptide reads, in one-letter code: Probable transcriptional regulatory protein TM1040_1893 (246 aa).

The interval 1–21 (MAGHSKWANIQHRKGRQDAAR) is disordered.

Belongs to the TACO1 family.

The protein resides in the cytoplasm. The chain is Probable transcriptional regulatory protein TM1040_1893 from Ruegeria sp. (strain TM1040) (Silicibacter sp.).